A 752-amino-acid polypeptide reads, in one-letter code: MSDMAERLALHEFTENAYLNYSMYVIMDRALPFIGDGLKPVQRRIVYAMSELGLNASAKFKKSARTVGDVLGKYHPHGDSACYEAMVLMAQPFSYRYPLVDGQGNWGAPDDPKSFAAMRYTESRLSKYSELLLSELGQGTADWVPNFDGTLQEPKMLPARLPNILLNGTTGIAVGMATDIPPHNLREVAQAAIALIDQPKTTLDQLLDIVQGPDYPTEAEIITSRAEIRKIYENGRGSVRMRAVWKKEDGAVVISALPHQVSGARVLEQIAAQMRNKKLPMVDDLRDESDHENPTRLVIVPRSNRVDMDQVMNHLFATTDLEKSYRINLNMIGLDGRPAVKNLLEILSEWLVFRRDTVRRRLNYRLEKVLKRLHILEGLLVAFLNIDEVIEIIRNEDEPKPALMSRFGLTETQAEAILELKLRHLAKLEEMKIRGEQSELEKERDQLQGILASERKMNNLLKKELQADAQAYGDDRRSPLQEREEAKAMSEHDMLPSEPVTIVLSQMGWVRSAKGHDIDAPGLNYKAGDSFKAAVKGKSNQPVVFVDSTGRSYAIDPITLPSARGQGEPLTGKLTLPPGATVDHMLMESDDQKLLMASDAGYGFVCTFNDLVARNRAGKALITLPENAHVMPPVVIEDASDMLLAITQAGRMLMFPVSDLPQLSKGKGNKIINIPSAEAARGEDGLAQLYVLPPQSTLTIHVGKRKIKLRPEELQKVTGERGRRGTLMRGLQRIDRVEIDSPRRASSGDSEE.

The region spanning 31 to 494 (LPFIGDGLKP…EAKAMSEHDM (464 aa)) is the Topo IIA-type catalytic domain. Y120 acts as the O-(5'-phospho-DNA)-tyrosine intermediate in catalysis. 2 disordered regions span residues 472–492 (YGDD…MSEH) and 718–752 (TGER…DSEE). Basic and acidic residues-rich tracts occupy residues 473–492 (GDDR…MSEH) and 732–743 (QRIDRVEIDSPR).

This sequence belongs to the type II topoisomerase GyrA/ParC subunit family. ParC type 1 subfamily. As to quaternary structure, heterotetramer composed of ParC and ParE.

It localises to the cell membrane. The enzyme catalyses ATP-dependent breakage, passage and rejoining of double-stranded DNA.. Functionally, topoisomerase IV is essential for chromosome segregation. It relaxes supercoiled DNA. Performs the decatenation events required during the replication of a circular DNA molecule. The chain is DNA topoisomerase 4 subunit A from Escherichia coli O157:H7.